We begin with the raw amino-acid sequence, 83 residues long: Small ribosomal subunit protein eS21 (83 aa).

This sequence belongs to the eukaryotic ribosomal protein eS21 family. Component of the 40S small ribosomal subunit.

It localises to the cytoplasm. The protein localises to the cytosol. The protein resides in the rough endoplasmic reticulum. The chain is Small ribosomal subunit protein eS21 (RpS21) from Spodoptera frugiperda (Fall armyworm).